Consider the following 429-residue polypeptide: N5-carboxyaminoimidazole ribonucleotide synthase (429 aa).

ATP contacts are provided by residues K117, K157, 194-197 (EERV), E202, and 280-281 (NE). Residues 121–310 (RQRLAAAGVA…QFEQHLRAVL (190 aa)) enclose the ATP-grasp domain. The interval 406–429 (RASDDAVGVPPACGGRSDEEERRL) is disordered.

The protein belongs to the PurK/PurT family. In terms of assembly, homodimer.

It carries out the reaction 5-amino-1-(5-phospho-beta-D-ribosyl)imidazole + hydrogencarbonate + ATP = 5-carboxyamino-1-(5-phospho-D-ribosyl)imidazole + ADP + phosphate + 2 H(+). It participates in purine metabolism; IMP biosynthesis via de novo pathway; 5-amino-1-(5-phospho-D-ribosyl)imidazole-4-carboxylate from 5-amino-1-(5-phospho-D-ribosyl)imidazole (N5-CAIR route): step 1/2. In terms of biological role, catalyzes the ATP-dependent conversion of 5-aminoimidazole ribonucleotide (AIR) and HCO(3)(-) to N5-carboxyaminoimidazole ribonucleotide (N5-CAIR). The protein is N5-carboxyaminoimidazole ribonucleotide synthase of Mycobacterium bovis (strain ATCC BAA-935 / AF2122/97).